The chain runs to 42 residues: uncharacterized protein (42 aa).

The disordered stretch occupies residues 1 to 42 (MTTGKPQSFEKMRTPFPGRSKAKGPQSDIIPSAPPNTPVTEH). Pro residues predominate over residues 32–42 (SAPPNTPVTEH).

This is an uncharacterized protein from Schizosaccharomyces pombe (strain 972 / ATCC 24843) (Fission yeast).